We begin with the raw amino-acid sequence, 256 residues long: Acetylglutamate kinase (256 aa).

Residues 40–41 (GG), arginine 62, and asparagine 154 contribute to the substrate site.

It belongs to the acetylglutamate kinase family. ArgB subfamily.

The protein resides in the cytoplasm. The enzyme catalyses N-acetyl-L-glutamate + ATP = N-acetyl-L-glutamyl 5-phosphate + ADP. The protein operates within amino-acid biosynthesis; L-arginine biosynthesis; N(2)-acetyl-L-ornithine from L-glutamate: step 2/4. Its function is as follows. Catalyzes the ATP-dependent phosphorylation of N-acetyl-L-glutamate. The protein is Acetylglutamate kinase of Staphylococcus aureus (strain MRSA252).